A 289-amino-acid polypeptide reads, in one-letter code: Rhodopsin (289 aa).

The Extracellular segment spans residues 1-7; that stretch reads YLVNPAG. A helical membrane pass occupies residues 8–32; sequence YAALGAYMFLLILIGFPVNFLTLYV. The Cytoplasmic segment spans residues 33-44; the sequence is TLEHKKLRTPLN. A helical transmembrane segment spans residues 45–67; that stretch reads YILLNLAVADLFMVLGGFTTTMY. Topologically, residues 68–81 are extracellular; that stretch reads TSMHGYFVLGRLGC. Cysteine 81 and cysteine 158 are disulfide-bonded. The helical transmembrane segment at 82–104 threads the bilayer; that stretch reads NLEGFFATLGGEIALWSLVVLAI. Residues 105–107 carry the 'Ionic lock' involved in activated form stabilization motif; it reads ERW. Topologically, residues 105–123 are cytoplasmic; the sequence is ERWIVGLKPIRNFRFTEDH. A helical transmembrane segment spans residues 124 to 144; sequence AIMGLAFSWVMALSCAVPPLA. The Extracellular segment spans residues 145-173; the sequence is GWLRYIPEGIQGSCGVDYYTRAEGFNNES. Asparagine 171 carries N-linked (GlcNAc...) asparagine glycosylation. The chain crosses the membrane as a helical span at residues 174-195; it reads FVIYMFTVHFLIPLSVIFFCYG. At 196 to 223 the chain is on the cytoplasmic side; the sequence is RLLCAVKEAAAAQQESETTQRAEKEVSR. A helical transmembrane segment spans residues 224 to 245; that stretch reads MVVIMVIGFLVCWLPYASVAWW. The Extracellular segment spans residues 246–257; it reads IFCNQGSDFGPI. Residues 258–279 traverse the membrane as a helical segment; that stretch reads FMTLPSFFAKRPAIYNPMIYIC. Lysine 267 is subject to N6-(retinylidene)lysine. Over 280–289 the chain is Cytoplasmic; that stretch reads MNKQFRHCMI.

The protein belongs to the G-protein coupled receptor 1 family. Opsin subfamily. In terms of processing, phosphorylated on some or all of the serine and threonine residues present in the C-terminal region. Post-translationally, contains one covalently linked retinal chromophore.

The protein localises to the membrane. It is found in the cell projection. The protein resides in the cilium. Its subcellular location is the photoreceptor outer segment. Photoreceptor required for image-forming vision at low light intensity. While most salt water fish species use retinal as chromophore, most freshwater fish use 3-dehydroretinal, or a mixture of retinal and 3-dehydroretinal. Light-induced isomerization of 11-cis to all-trans retinal triggers a conformational change that activates signaling via G-proteins. Subsequent receptor phosphorylation mediates displacement of the bound G-protein alpha subunit by arrestin and terminates signaling. This Limnocottus pallidus (Ray-finned fish) protein is Rhodopsin (rho).